The primary structure comprises 167 residues: Small ribosomal subunit protein uS5 (167 aa).

Positions 12–75 (LEERVVTINR…EDAKKNMVFV (64 aa)) constitute an S5 DRBM domain.

Belongs to the universal ribosomal protein uS5 family. Part of the 30S ribosomal subunit. Contacts proteins S4 and S8.

Its function is as follows. With S4 and S12 plays an important role in translational accuracy. In terms of biological role, located at the back of the 30S subunit body where it stabilizes the conformation of the head with respect to the body. This Listeria innocua serovar 6a (strain ATCC BAA-680 / CLIP 11262) protein is Small ribosomal subunit protein uS5.